The following is a 206-amino-acid chain: Thymidylate kinase (206 aa).

Gly-10–Ser-17 is a binding site for ATP.

Belongs to the thymidylate kinase family.

The catalysed reaction is dTMP + ATP = dTDP + ADP. Functionally, phosphorylation of dTMP to form dTDP in both de novo and salvage pathways of dTTP synthesis. The chain is Thymidylate kinase from Caldicellulosiruptor saccharolyticus (strain ATCC 43494 / DSM 8903 / Tp8T 6331).